Reading from the N-terminus, the 627-residue chain is BEL1-like homeodomain protein 4 (627 aa).

Residues S206 to P225 form a disordered region. Residues V215–P225 show a composition bias toward low complexity. The interval S241 to V257 is SR/KY domain. A disordered region spans residues K263–Q307. The interval D302–L373 is BELL domain. The homeobox DNA-binding region spans A424–M486. The tract at residues E494–N530 is disordered. Positions N507–N530 are enriched in low complexity.

It belongs to the TALE/BELL homeobox family. As to quaternary structure, may form heterodimeric complexes with TALE/KNOX proteins. Interacts with OFP1, OFP2 and OFP5. Interacts with KNATM, isoform KNATM-B. In terms of tissue distribution, expressed in lateral organs.

Its subcellular location is the nucleus. Transcription factor that establishes leaf shape by repressing growth in specific subdomains of the leaf. Negatively regulates knox homeobox gene KNAT1/BP expression. The chain is BEL1-like homeodomain protein 4 (BLH4) from Arabidopsis thaliana (Mouse-ear cress).